Reading from the N-terminus, the 164-residue chain is Lipoprotein signal peptidase (164 aa).

The next 4 membrane-spanning stretches (helical) occupy residues Tyr11–Ser31, Val41–Leu61, Gln64–Val84, and Phe92–Ile112. Active-site residues include Asp122 and Asp140. A helical transmembrane segment spans residues Phe132–Leu152.

The protein belongs to the peptidase A8 family.

The protein localises to the cell inner membrane. It catalyses the reaction Release of signal peptides from bacterial membrane prolipoproteins. Hydrolyzes -Xaa-Yaa-Zaa-|-(S,diacylglyceryl)Cys-, in which Xaa is hydrophobic (preferably Leu), and Yaa (Ala or Ser) and Zaa (Gly or Ala) have small, neutral side chains.. Its pathway is protein modification; lipoprotein biosynthesis (signal peptide cleavage). In terms of biological role, this protein specifically catalyzes the removal of signal peptides from prolipoproteins. The polypeptide is Lipoprotein signal peptidase (Neisseria gonorrhoeae (strain ATCC 700825 / FA 1090)).